The primary structure comprises 439 residues: Homogentisate 1,2-dioxygenase (439 aa).

H293 serves as the catalytic Proton acceptor. The Fe cation site is built by H336 and E342. Positions 351 and 372 each coordinate homogentisate. Residue H372 participates in Fe cation binding.

This sequence belongs to the homogentisate dioxygenase family. In terms of assembly, hexamer; dimer of trimers. Fe cation serves as cofactor.

The catalysed reaction is homogentisate + O2 = 4-maleylacetoacetate + H(+). It participates in amino-acid degradation; L-phenylalanine degradation; acetoacetate and fumarate from L-phenylalanine: step 4/6. Involved in the catabolism of homogentisate (2,5-dihydroxyphenylacetate or 2,5-OH-PhAc), a central intermediate in the degradation of phenylalanine and tyrosine. Catalyzes the oxidative ring cleavage of the aromatic ring of homogentisate to yield maleylacetoacetate. This is Homogentisate 1,2-dioxygenase from Cupriavidus necator (strain ATCC 17699 / DSM 428 / KCTC 22496 / NCIMB 10442 / H16 / Stanier 337) (Ralstonia eutropha).